The sequence spans 315 residues: Alpha- and gamma-adaptin-binding protein p34 (315 aa).

The disordered stretch occupies residues 197–233 (IGSADPCHPEQPHLPAADRTESLSDHRGGASNTTDAQ). Residues 203 to 224 (CHPEQPHLPAADRTESLSDHRG) show a composition bias toward basic and acidic residues. Ser310 and Ser311 each carry phosphoserine.

In terms of assembly, associated with AP-1 and AP-2 complexes.

Its subcellular location is the cytoplasm. The protein resides in the cytosol. Functionally, may be involved in endocytic recycling of growth factor receptors such as EGFR. This chain is Alpha- and gamma-adaptin-binding protein p34 (AAGAB), found in Pongo abelii (Sumatran orangutan).